The sequence spans 385 residues: MGCGASRKVVPGPPALAWAKHEGQNQAGVGGAGPGPEAAAQAAQRIQVARFRAKFDPRVLARYDIKALIGTGSFSRVVRVEQKTTKKPFAIKVMETREREGREACVSELSVLRRVSHRYIVQLMEIFETEDQVYMVMELATGGELFDRLIAQGSFTERDAVRILQMVADGIRYLHALQITHRNLKPENLLYYHPGEESKILITDFGLAYSGKKSGDWTMKTLCGTPEYIAPEVLLRKPYTSAVDMWALGVITYALLSGFLPFDDESQTRLYRKILKGKYNYTGEPWPSISHLAKDFIDKLLILEAGHRMSAGQALDHPWVITMAAGSSMKNLQRAISRNLMQRASPHSQSPGSAQSSKSHYSHKSRHMWSKRNLRIVESPLSALL.

The Protein kinase domain maps to 63 to 320 (YDIKALIGTG…AGQALDHPWV (258 aa)). ATP is bound by residues 69–77 (IGTGSFSRV) and K92. The tract at residues 342-367 (QRASPHSQSPGSAQSSKSHYSHKSRH) is disordered. Residues 344–359 (ASPHSQSPGSAQSSKS) show a composition bias toward low complexity.

The protein belongs to the protein kinase superfamily. CAMK Ser/Thr protein kinase family.

The catalysed reaction is L-seryl-[protein] + ATP = O-phospho-L-seryl-[protein] + ADP + H(+). It catalyses the reaction L-threonyl-[protein] + ATP = O-phospho-L-threonyl-[protein] + ADP + H(+). This Homo sapiens (Human) protein is Serine/threonine-protein kinase H2 (PSKH2).